The chain runs to 88 residues: Enticin (88 aa).

Positions 1–19 are cleaved as a signal peptide; sequence MKTALPLLLLTCLVAAVQS. Disulfide bonds link cysteine 25–cysteine 33, cysteine 40–cysteine 52, and cysteine 59–cysteine 67. Positions 69-88 are excised as a propeptide; sequence REQSQLNHDHLNNHTTTQQP.

Binds to attractin and temptin.

Its subcellular location is the secreted. Its function is as follows. A component of the complex of water-borne protein pheromones that stimulates attraction and mating behavior. The polypeptide is Enticin (Aplysia californica (California sea hare)).